A 168-amino-acid chain; its full sequence is Ribosome maturation factor RimM (168 aa).

The PRC barrel domain occupies 93-167; the sequence is ENEFYQSDLV…YITLNMPEFI (75 aa).

Belongs to the RimM family. As to quaternary structure, binds ribosomal protein uS19.

The protein localises to the cytoplasm. In terms of biological role, an accessory protein needed during the final step in the assembly of 30S ribosomal subunit, possibly for assembly of the head region. Essential for efficient processing of 16S rRNA. May be needed both before and after RbfA during the maturation of 16S rRNA. It has affinity for free ribosomal 30S subunits but not for 70S ribosomes. This Wolbachia sp. subsp. Brugia malayi (strain TRS) protein is Ribosome maturation factor RimM.